The primary structure comprises 112 residues: Large ribosomal subunit protein uL24 (112 aa).

Residues 92–112 are disordered; that stretch reads ERDGKQKTVRVRVSKSTGKDL.

The protein belongs to the universal ribosomal protein uL24 family. As to quaternary structure, part of the 50S ribosomal subunit.

One of two assembly initiator proteins, it binds directly to the 5'-end of the 23S rRNA, where it nucleates assembly of the 50S subunit. Its function is as follows. One of the proteins that surrounds the polypeptide exit tunnel on the outside of the subunit. This chain is Large ribosomal subunit protein uL24, found in Kocuria rhizophila (strain ATCC 9341 / DSM 348 / NBRC 103217 / DC2201).